Here is a 193-residue protein sequence, read N- to C-terminus: Dual-action ribosomal maturation protein DarP (193 aa).

Residues 1–10 (MRGRDEETGE) show a composition bias toward basic and acidic residues. Disordered stretches follow at residues 1-20 (MRGR…SQQR) and 171-193 (QEQG…EDDE). The segment covering 178 to 193 (GDSELEDGESASEDDE) has biased composition (acidic residues).

It belongs to the DarP family.

It localises to the cytoplasm. Member of a network of 50S ribosomal subunit biogenesis factors which assembles along the 30S-50S interface, preventing incorrect 23S rRNA structures from forming. Promotes peptidyl transferase center (PTC) maturation. This Xanthomonas axonopodis pv. citri (strain 306) protein is Dual-action ribosomal maturation protein DarP.